A 282-amino-acid chain; its full sequence is Acetylglutamate kinase (282 aa).

Residues 62–63 (GG), Arg84, and Asn178 contribute to the substrate site.

Belongs to the acetylglutamate kinase family. ArgB subfamily.

Its subcellular location is the cytoplasm. The enzyme catalyses N-acetyl-L-glutamate + ATP = N-acetyl-L-glutamyl 5-phosphate + ADP. It functions in the pathway amino-acid biosynthesis; L-arginine biosynthesis; N(2)-acetyl-L-ornithine from L-glutamate: step 2/4. Catalyzes the ATP-dependent phosphorylation of N-acetyl-L-glutamate. In Thermotoga sp. (strain RQ2), this protein is Acetylglutamate kinase.